A 311-amino-acid chain; its full sequence is Methionyl-tRNA formyltransferase (311 aa).

Ser109–Pro112 contacts (6S)-5,6,7,8-tetrahydrofolate.

It belongs to the Fmt family.

The enzyme catalyses L-methionyl-tRNA(fMet) + (6R)-10-formyltetrahydrofolate = N-formyl-L-methionyl-tRNA(fMet) + (6S)-5,6,7,8-tetrahydrofolate + H(+). In terms of biological role, attaches a formyl group to the free amino group of methionyl-tRNA(fMet). The formyl group appears to play a dual role in the initiator identity of N-formylmethionyl-tRNA by promoting its recognition by IF2 and preventing the misappropriation of this tRNA by the elongation apparatus. This chain is Methionyl-tRNA formyltransferase, found in Staphylococcus aureus (strain MW2).